Here is a 219-residue protein sequence, read N- to C-terminus: Uracil-DNA glycosylase (219 aa).

The active-site Proton acceptor is Asp63.

This sequence belongs to the uracil-DNA glycosylase (UDG) superfamily. UNG family.

The protein resides in the cytoplasm. It carries out the reaction Hydrolyzes single-stranded DNA or mismatched double-stranded DNA and polynucleotides, releasing free uracil.. Its function is as follows. Excises uracil residues from the DNA which can arise as a result of misincorporation of dUMP residues by DNA polymerase or due to deamination of cytosine. In Mesomycoplasma hyopneumoniae (strain 7448) (Mycoplasma hyopneumoniae), this protein is Uracil-DNA glycosylase.